We begin with the raw amino-acid sequence, 251 residues long: Probable transcriptional regulatory protein Blon_1155/BLIJ_1182 (251 aa).

Belongs to the TACO1 family.

Its subcellular location is the cytoplasm. This chain is Probable transcriptional regulatory protein Blon_1155/BLIJ_1182, found in Bifidobacterium longum subsp. infantis (strain ATCC 15697 / DSM 20088 / JCM 1222 / NCTC 11817 / S12).